The primary structure comprises 935 residues: Ribonuclease E (935 aa).

The S1 motif domain occupies 39–119 (ANIYKGKITR…GNKGAALTTF (81 aa)). Mg(2+) is bound by residues D302 and D345. Zn(2+) is bound by residues C403 and C406. The segment at 403–406 (CPRC) is required for zinc-mediated homotetramerization and catalytic activity. Disordered stretches follow at residues 571 to 669 (TKSE…DLRK) and 698 to 743 (VQNN…KSPM). Basic and acidic residues-rich tracts occupy residues 593–625 (RSQD…ERNQ) and 701–719 (NDEK…ERQR). Residues 720–734 (RTPRHLRAANNQRRR) show a composition bias toward basic residues.

This sequence belongs to the RNase E/G family. RNase E subfamily. As to quaternary structure, component of the RNA degradosome, which is a multiprotein complex involved in RNA processing and mRNA degradation. Within the RNA degradosome, RNase E assembles into a homotetramer formed by a dimer of dimers. It depends on Zn(2+) as a cofactor. The cofactor is Mg(2+).

It is found in the cytoplasm. Its subcellular location is the cell inner membrane. It catalyses the reaction Endonucleolytic cleavage of single-stranded RNA in A- and U-rich regions.. In terms of biological role, endoribonuclease that plays a central role in RNA processing and decay. Required for the maturation of 5S and 16S rRNAs and the majority of tRNAs. Also involved in the degradation of most mRNAs. This is Ribonuclease E from Haemophilus influenzae (strain ATCC 51907 / DSM 11121 / KW20 / Rd).